Consider the following 134-residue polypeptide: MGKDTIADIITYIRNADMNKKGMVQIPFTNITENIVKILLREGFVENVRKHRENDKYFLVLTLRYRRNRKGSYKSFLNLKRISTPGLRIYSNYQRIPRILGGMGIVILSTSRGIMTDREARLERIGGEVLCYIW.

This sequence belongs to the universal ribosomal protein uS8 family. As to quaternary structure, part of the 30S ribosomal subunit.

The protein localises to the plastid. The protein resides in the chloroplast. Functionally, one of the primary rRNA binding proteins, it binds directly to 16S rRNA central domain where it helps coordinate assembly of the platform of the 30S subunit. This is Small ribosomal subunit protein uS8c (rps8) from Glycine max (Soybean).